The following is a 1141-amino-acid chain: Myosin-binding protein C, fast-type (1141 aa).

The segment at 1–62 is disordered; sequence MPEAKPAAKK…VFLKKPDSVS (62 aa). Residues 13–39 show a composition bias toward basic and acidic residues; it reads KGKDAPKGAPKEAPPKEAPAEAPKEAP. Ig-like C2-type domains follow at residues 50 to 153, 255 to 344, 345 to 437, 438 to 538, and 539 to 638; these read PTGV…NIDV, SAAF…VKEP, PVLI…VEEK, QLEV…KQEP, and PKIH…VVDV. 2 consecutive Fibronectin type-III domains span residues 641–737 and 739–834; these read PPEA…IAPT and EPLH…IREI. Residues 838-932 form the Ig-like C2-type 6 domain; it reads PKIRLPRHLR…ATIRIRVVEK (95 aa). The Fibronectin type-III 3 domain occupies 935-1030; the sequence is PPINVMVKEV…SKNTARILKT (96 aa). The Ig-like C2-type 7 domain maps to 1048–1141; the sequence is PKFLTPLIDR…ECKLEVRVPQ (94 aa).

This sequence belongs to the immunoglobulin superfamily. MyBP family.

Functionally, thick filament-associated protein located in the crossbridge region of vertebrate striated muscle a bands. In vitro it binds MHC, F-actin and native thin filaments, and modifies the activity of actin-activated myosin ATPase. It may modulate muscle contraction or may play a more structural role. This chain is Myosin-binding protein C, fast-type (MYBPC2), found in Homo sapiens (Human).